The chain runs to 279 residues: Large ribosomal subunit protein uL2 (279 aa).

Positions 223 to 279 (VVMNPVDHPHGGGEGRTSGGRHPVSPWGQPTKGYKTRRSARPSDKFIVQKRKRNRNR) are disordered. A compositionally biased stretch (basic residues) spans 270-279 (VQKRKRNRNR).

It belongs to the universal ribosomal protein uL2 family. As to quaternary structure, part of the 50S ribosomal subunit. Forms a bridge to the 30S subunit in the 70S ribosome.

Functionally, one of the primary rRNA binding proteins. Required for association of the 30S and 50S subunits to form the 70S ribosome, for tRNA binding and peptide bond formation. It has been suggested to have peptidyltransferase activity; this is somewhat controversial. Makes several contacts with the 16S rRNA in the 70S ribosome. This chain is Large ribosomal subunit protein uL2, found in Leptospira borgpetersenii serovar Hardjo-bovis (strain JB197).